We begin with the raw amino-acid sequence, 535 residues long: Arginine-containing cyclodipeptide synthase anoA (535 aa).

The segment at 93 to 114 (LLSPPREPGPIDSETKTREKKS) is disordered. Positions 105–114 (SETKTREKKS) are enriched in basic and acidic residues. The short motif at 424–428 (DDIAE) is the Conserved DDXXE motif element.

The protein belongs to the arginine-containing cyclodipeptide synthase family.

The enzyme catalyses L-tryptophyl-tRNA(Trp) + L-arginyl-tRNA(Arg) = cyclo(L-arginyl-L-tryptophyl) + tRNA(Trp) + tRNA(Arg) + H(+). It participates in secondary metabolite biosynthesis. Its function is as follows. Arginine-containing cyclodipeptide synthase; part of the cluster that mediates the biosynthesis of a highly modified cyclo-arginine-tryptophan dipeptide (cRW). Within the pathway, AnoA acts as the scaffold-generating enzyme and is responsible for formation of the cyclo-Arg-Trp diketopiperazine (cRW) from L-arginyl-tRNA(Arg) + L-tryptophanyl-tRNA(Trp). Additional enzymes from the cluster then further modify the cyclo-Arg-Asp diketopiperazine (cRW) scaffold. In Aspergillus nomiae (Aspergillus nomius), this protein is Arginine-containing cyclodipeptide synthase anoA.